A 732-amino-acid chain; its full sequence is Integrator complex subunit 13 (732 aa).

Positions 564-648 (PPEEEERKKR…DETPHMEKSK (85 aa)) are enriched in basic and acidic residues. The tract at residues 564–650 (PPEEEERKKR…TPHMEKSKGP (87 aa)) is disordered. A Nuclear localization signal (NLS) motif is present at residues 572-582 (KRGRKREDRED). K611 participates in a covalent cross-link: Glycyl lysine isopeptide (Lys-Gly) (interchain with G-Cter in SUMO2). S623, S626, and S678 each carry phosphoserine. The segment at 649–694 (GPVSLLSLWSNRINTANSRKHQEFAGRLNSVNNRAELYQHLKEENG) is cleavage module binding motif (CMBM).

Belongs to the Integrator subunit 13 family. Component of the Integrator complex, composed of core subunits INTS1, INTS2, INTS3, INTS4, INTS5, INTS6, INTS7, INTS8, INTS9/RC74, INTS10, INTS11/CPSF3L, INTS12, INTS13, INTS14 and INTS15. The core complex associates with protein phosphatase 2A subunits PPP2CA and PPP2R1A, to form the Integrator-PP2A (INTAC) complex. INTS13 is part of the tail subcomplex, composed of INTS10, INTS13, INTS14 and INTS15. Interacts with transcription factors ZNF609 and ZNF655. Interacts with PAFAH1B1; this interaction may be required for proper recruitment of dynein complexes to the nuclear envelope at prophase.

It is found in the nucleus. Its subcellular location is the cytoplasm. Component of the integrator complex, a multiprotein complex that terminates RNA polymerase II (Pol II) transcription in the promoter-proximal region of genes. The integrator complex provides a quality checkpoint during transcription elongation by driving premature transcription termination of transcripts that are unfavorably configured for transcriptional elongation: the complex terminates transcription by (1) catalyzing dephosphorylation of the C-terminal domain (CTD) of Pol II subunit POLR2A/RPB1 and SUPT5H/SPT5, (2) degrading the exiting nascent RNA transcript via endonuclease activity and (3) promoting the release of Pol II from bound DNA. The integrator complex is also involved in terminating the synthesis of non-coding Pol II transcripts, such as enhancer RNAs (eRNAs), small nuclear RNAs (snRNAs), telomerase RNAs and long non-coding RNAs (lncRNAs). Within the integrator complex, INTS13 is part of the integrator tail module and acts as a platform for the recruitment of transcription factors at promoters. At prophase, mediates recruitment of cytoplasmic dynein to the nuclear envelope, a step important for proper centrosome-nucleus coupling. At G2/M phase, may be required for proper spindle formation and execution of cytokinesis. The polypeptide is Integrator complex subunit 13 (Mus musculus (Mouse)).